Reading from the N-terminus, the 887-residue chain is Phosphatidylinositol 3-kinase catalytic subunit type 3 (887 aa).

A C2 PI3K-type domain is found at 35-184; that stretch reads YKAVLEDPML…LAKLTKAHRQ (150 aa). The interval 149-170 is disordered; the sequence is VEADGSEPTRTPGRTSSTLSED. The span at 156-170 shows a compositional bias: polar residues; the sequence is PTRTPGRTSSTLSED. Residue Thr163 is modified to Phosphothreonine; by AMPK. Ser165 carries the phosphoserine; by AMPK modification. Phosphoserine occurs at positions 244, 261, and 282. The PIK helical domain occupies 283 to 520; the sequence is DHDLKPNATT…PKTHEMYLNV (238 aa). Residues 416–467 are disordered; it reads EPTKKDSQASVSESLSSSGVSSADIDSSQIITNPLPPVASPPPASKSKEVSD. Positions 423 to 444 are enriched in low complexity; the sequence is QASVSESLSSSGVSSADIDSSQ. Positions 449-459 are enriched in pro residues; that stretch reads PLPPVASPPPA. In terms of domain architecture, PI3K/PI4K catalytic spans 605–871; the sequence is IPETATLFKS…LIDESVHALF (267 aa). A G-loop region spans residues 611 to 617; sequence LFKSALM. The tract at residues 740-748 is catalytic loop; sequence GVGDRHLDN. The segment at 759 to 780 is activation loop; it reads HIDFGYILGRDPKPLPPPMKLN.

The protein belongs to the PI3/PI4-kinase family. In terms of assembly, component of the PI3K (PI3KC3/PI3K-III/class III phosphatidylinositol 3-kinase) complex the core of which is composed of the catalytic subunit PIK3C3, the regulatory subunit PIK3R4 and BECN1 associating with additional regulatory/auxiliary subunits to form alternative complex forms. Alternative complex forms containing a fourth regulatory subunit in a mutually exclusive manner are: the PI3K complex I (PI3KC3-C1) containing ATG14, and the PI3K complex II (PI3KC3-C2) containing UVRAG. PI3KC3-C1 displays a V-shaped architecture with PIK3R4 serving as a bridge between PIK3C3 and the ATG14:BECN1 subcomplex. Both, PI3KC3-C1 and PI3KC3-C2, can associate with further regulatory subunits such as RUBCN, SH3GLB1/Bif-1 and AMBRA1. PI3KC3-C1 probably associates with PIK3CB. Interacts with RAB7A in the presence of PIK3R4. Interacts with AMBRA1. Interacts with BECN1P1/BECN2. Interacts with SLAMF1. May interact with DYN2. May be a component of a complex composed of RAB5A (in GDP-bound form), DYN2 and PIK3C3. Interacts with NCKAP1L. Interacts with ATG14; this interaction is increased in the absence of TMEM39A. Interacts with STEEP1; the interaction is STING1-dependent and required for trafficking of STING1 from the endoplasmic reticulum. Interacts with YWHAG. Interacts with ARMC3. Mn(2+) is required as a cofactor. Ubiquitinated via 'Lys-29'- and 'Lys-48'-linked ubiquitination by UBE3C, promoting its degradation. Deubiquitination by ZRANB1/TRABID promotes its stabilization, leading to autophagosome maturation.

It is found in the midbody. The protein localises to the late endosome. Its subcellular location is the cytoplasmic vesicle. The protein resides in the autophagosome. The enzyme catalyses a 1,2-diacyl-sn-glycero-3-phospho-(1D-myo-inositol) + ATP = a 1,2-diacyl-sn-glycero-3-phospho-(1D-myo-inositol-3-phosphate) + ADP + H(+). Its function is as follows. Catalytic subunit of the PI3K complex that mediates formation of phosphatidylinositol 3-phosphate; different complex forms are believed to play a role in multiple membrane trafficking pathways: PI3KC3-C1 is involved in initiation of autophagosomes and PI3KC3-C2 in maturation of autophagosomes and endocytosis. As part of PI3KC3-C1, promotes endoplasmic reticulum membrane curvature formation prior to vesicle budding. Involved in regulation of degradative endocytic trafficking and required for the abscission step in cytokinesis, probably in the context of PI3KC3-C2. Involved in the transport of lysosomal enzyme precursors to lysosomes. Required for transport from early to late endosomes. This Rattus norvegicus (Rat) protein is Phosphatidylinositol 3-kinase catalytic subunit type 3.